Here is a 180-residue protein sequence, read N- to C-terminus: Putative manganese efflux pump MntP (180 aa).

Transmembrane regions (helical) follow at residues 1–21 (MLSV…ISIT), 34–54 (ILWY…IGYV), 63–83 (ISTY…LNMI), 103–123 (VTLL…TFAI), 129–149 (VIPC…GIFI), and 160–180 (KFQI…LLGF).

It belongs to the MntP (TC 9.B.29) family.

The protein localises to the cell membrane. In terms of biological role, probably functions as a manganese efflux pump. This is Putative manganese efflux pump MntP from Methanosphaera stadtmanae (strain ATCC 43021 / DSM 3091 / JCM 11832 / MCB-3).